The chain runs to 79 residues: Protein NOI4 (79 aa).

The disordered stretch occupies residues 31 to 68 (KARDEKKTGGKPGSPGKSSEGHVKSGGGDPSKPQPKKW). A Phosphoserine modification is found at serine 44.

It belongs to the RIN4 family. Proteolytic cleaved by P.syringae pv tomato AvrRpt2 after Gly-12; this cleavage is critical for subsequent proteasome-dependent elimination.

This is Protein NOI4 from Arabidopsis thaliana (Mouse-ear cress).